The following is a 118-amino-acid chain: Large ribosomal subunit protein bL20 (118 aa).

It belongs to the bacterial ribosomal protein bL20 family.

Its function is as follows. Binds directly to 23S ribosomal RNA and is necessary for the in vitro assembly process of the 50S ribosomal subunit. It is not involved in the protein synthesizing functions of that subunit. The sequence is that of Large ribosomal subunit protein bL20 from Kosmotoga olearia (strain ATCC BAA-1733 / DSM 21960 / TBF 19.5.1).